Here is a 178-residue protein sequence, read N- to C-terminus: ATP-dependent protease subunit HslV (178 aa).

The active site involves threonine 7. Glycine 162, cysteine 165, and threonine 168 together coordinate Na(+).

It belongs to the peptidase T1B family. HslV subfamily. As to quaternary structure, a double ring-shaped homohexamer of HslV is capped on each side by a ring-shaped HslU homohexamer. The assembly of the HslU/HslV complex is dependent on binding of ATP.

The protein localises to the cytoplasm. It carries out the reaction ATP-dependent cleavage of peptide bonds with broad specificity.. Allosterically activated by HslU binding. In terms of biological role, protease subunit of a proteasome-like degradation complex believed to be a general protein degrading machinery. The sequence is that of ATP-dependent protease subunit HslV from Burkholderia orbicola (strain AU 1054).